We begin with the raw amino-acid sequence, 78 residues long: Large ribosomal subunit protein uL29 (78 aa).

The protein belongs to the universal ribosomal protein uL29 family.

In Rhodococcus opacus (strain B4), this protein is Large ribosomal subunit protein uL29.